The following is a 535-amino-acid chain: Cytochrome P450 71C3 (535 aa).

A helical membrane pass occupies residues 23-43 (QTLTLLLIAVPTVLLLLASLA). Position 475 (cysteine 475) interacts with heme.

The protein belongs to the cytochrome P450 family. Requires heme as cofactor.

Its subcellular location is the membrane. It participates in secondary metabolite biosynthesis; 2,4-dihydroxy-1,4-benzoxazin-3-one biosynthesis; 2,4-dihydroxy-1,4-benzoxazin-3-one from indoleglycerol phosphate: step 5/5. Catalyzes the conversion of 2-hydroxy-1,4-benzoxazin-3-one (HBOA) to 2,4-dihydroxy-1,4-benzoxazin-3-one (DIBOA). This is Cytochrome P450 71C3 (CYP71C3) from Zea mays (Maize).